Consider the following 499-residue polypeptide: UDP-N-acetylmuramoyl-L-alanyl-D-glutamate--2,6-diaminopimelate ligase (499 aa).

S32 contributes to the UDP-N-acetyl-alpha-D-muramoyl-L-alanyl-D-glutamate binding site. 117 to 123 (GTNGKTT) is an ATP binding site. Residues 159–160 (TT), S186, Q192, and R194 contribute to the UDP-N-acetyl-alpha-D-muramoyl-L-alanyl-D-glutamate site. At K226 the chain carries N6-carboxylysine. Meso-2,6-diaminopimelate contacts are provided by residues R394, 418 to 421 (DNPR), G469, and E473. A Meso-diaminopimelate recognition motif motif is present at residues 418-421 (DNPR).

This sequence belongs to the MurCDEF family. MurE subfamily. It depends on Mg(2+) as a cofactor. In terms of processing, carboxylation is probably crucial for Mg(2+) binding and, consequently, for the gamma-phosphate positioning of ATP.

It localises to the cytoplasm. It carries out the reaction UDP-N-acetyl-alpha-D-muramoyl-L-alanyl-D-glutamate + meso-2,6-diaminopimelate + ATP = UDP-N-acetyl-alpha-D-muramoyl-L-alanyl-gamma-D-glutamyl-meso-2,6-diaminopimelate + ADP + phosphate + H(+). It functions in the pathway cell wall biogenesis; peptidoglycan biosynthesis. Catalyzes the addition of meso-diaminopimelic acid to the nucleotide precursor UDP-N-acetylmuramoyl-L-alanyl-D-glutamate (UMAG) in the biosynthesis of bacterial cell-wall peptidoglycan. This chain is UDP-N-acetylmuramoyl-L-alanyl-D-glutamate--2,6-diaminopimelate ligase, found in Synechococcus sp. (strain WH7803).